The primary structure comprises 469 residues: UTP--glucose-1-phosphate uridylyltransferase 2 (469 aa).

An N-acetylalanine modification is found at alanine 2. UTP is bound by residues 85–88 (LNGG), lysine 99, glutamine 162, and glycine 191. 87 to 88 (GG) is a substrate binding site. Substrate contacts are provided by residues histidine 192 and 220 to 222 (NSD). UTP-binding residues include aspartate 222 and lysine 360.

The protein belongs to the UDPGP type 1 family. In terms of tissue distribution, expressed in cauline leaves, flowers and siliques.

It is found in the cytoplasm. It catalyses the reaction alpha-D-glucose 1-phosphate + UTP + H(+) = UDP-alpha-D-glucose + diphosphate. In terms of biological role, converts glucose 1-phosphate to UDP-glucose, which is the major glycosyl donor for polysaccharides. Acts redundantly with UGP1 and is essential for the synthesis of sucrose, starch and cell wall, and callose deposition. This chain is UTP--glucose-1-phosphate uridylyltransferase 2, found in Arabidopsis thaliana (Mouse-ear cress).